Reading from the N-terminus, the 385-residue chain is 8-amino-7-oxononanoate synthase (385 aa).

Arg23 provides a ligand contact to substrate. Residue 110-111 participates in pyridoxal 5'-phosphate binding; the sequence is GF. Residue His135 coordinates substrate. Positions 180, 208, and 234 each coordinate pyridoxal 5'-phosphate. Lys237 is modified (N6-(pyridoxal phosphate)lysine). Thr350 provides a ligand contact to substrate.

It belongs to the class-II pyridoxal-phosphate-dependent aminotransferase family. BioF subfamily. As to quaternary structure, homodimer. Pyridoxal 5'-phosphate is required as a cofactor.

It carries out the reaction 6-carboxyhexanoyl-[ACP] + L-alanine + H(+) = (8S)-8-amino-7-oxononanoate + holo-[ACP] + CO2. It participates in cofactor biosynthesis; biotin biosynthesis. In terms of biological role, catalyzes the decarboxylative condensation of pimeloyl-[acyl-carrier protein] and L-alanine to produce 8-amino-7-oxononanoate (AON), [acyl-carrier protein], and carbon dioxide. The sequence is that of 8-amino-7-oxononanoate synthase from Vibrio vulnificus (strain YJ016).